We begin with the raw amino-acid sequence, 579 residues long: Small conductance calcium-activated potassium channel protein 2 (579 aa).

2 disordered regions span residues 1–54 and 90–115; these read MSSC…AAAA and TGGG…KKNQ. A compositionally biased stretch (gly residues) spans 90-103; it reads TGGGGGGGGSGHGS. Residues 138-158 form a helical membrane-spanning segment; the sequence is ALIFGMFGIVVMVIETELSWG. Residue Y160 is modified to Phosphotyrosine. Residues 168–188 form a helical membrane-spanning segment; it reads LALKCLISLSTIILLGLIIVY. The chain crosses the membrane as a helical span at residues 214–234; sequence IFFICLEILVCAIHPIPGNYT. A helical transmembrane segment spans residues 256–276; sequence IILSIPMFLRLYLIARVMLLH. The helical transmembrane segment at 305-325 threads the bilayer; that stretch reads LMTICPGTVLLVFSISLWIIA. The pore-forming intramembrane region spans 345 to 365; that stretch reads FLGAMWLISITFLSIGYGDMV. A helical transmembrane segment spans residues 374 to 394; sequence VCLLTGIMGAGCTALVVAVVA. The tract at residues 412-488 is calmodulin-binding; that stretch reads DTQLTKRVKN…LVDLAKTQNI (77 aa). Positions 551 to 579 are disordered; the sequence is VTYNAERSRSSSRRRRSSSTAPPTSSESS. Residues 568–579 are compositionally biased toward low complexity; sequence SSTAPPTSSESS.

Belongs to the potassium channel KCNN family. KCa2.2/KCNN2 subfamily. As to quaternary structure, homodimer. Heteromultimer with KCNN1 and KCNN3. The complex is composed of 4 channel subunits each of which binds to a calmodulin subunit which regulates the channel activity through calcium-binding. Interacts (via N-terminal domain) with MPP2. Expressed in atrial myocytes (at protein level). Widely expressed.

It is found in the membrane. The protein localises to the cytoplasm. The protein resides in the myofibril. It localises to the sarcomere. Its subcellular location is the z line. It carries out the reaction K(+)(in) = K(+)(out). With respect to regulation, inhibited by bee venom neurotoxin apamin. Inhibited by UCL 1684 and tetraethylammonium (TEA). In terms of biological role, small conductance calcium-activated potassium channel that mediates the voltage-independent transmembrane transfer of potassium across the cell membrane through a constitutive interaction with calmodulin which binds the intracellular calcium allowing its opening. The current is characterized by a voltage-independent activation, an intracellular calcium concentration increase-dependent activation and a single-channel conductance of about 3 picosiemens. Also presents an inwardly rectifying current, thus reducing its already small outward conductance of potassium ions, which is particularly the case when the membrane potential displays positive values, above + 20 mV. The inward rectification could be due to a blockade of the outward current by intracellular divalent cations such as calcium and magnesium and could also be due to an intrinsic property of the channel pore, independent of intracellular divalent ions. There are three positively charged amino acids in the S6 transmembrane domain, close to the pore, that collectively control the conductance and rectification through an electrostatic mechanism. Additionally, electrostatic contributions from these residues also play an important role in determining the intrinsic open probability of the channel in the absence of calcium, affecting the apparent calcium affinity for activation. Forms an heteromeric complex with calmodulin, which is constitutively associated in a calcium-independent manner. Channel opening is triggered when calcium binds the calmodulin resulting in a rotary movement leading to the formation of the dimeric complex to open the gate. Plays a role in the repolarization phase of cardiac action potential. This Homo sapiens (Human) protein is Small conductance calcium-activated potassium channel protein 2.